The following is a 213-amino-acid chain: Citrate synthase, mitochondrial (213 aa).

Histidine 74 is a catalytic residue. Residues lysine 94 and lysine 100 each carry the N6-acetyllysine; alternate modification. Lysine 94 and lysine 100 each carry N6-succinyllysine; alternate. Histidine 120 is a catalytic residue. Arginine 129 contacts oxaloacetate. Lysine 148 is modified (N6-acetyllysine; alternate). Lysine 148 carries the post-translational modification N6-succinyllysine; alternate. Lysine 155 is modified (N6-acetyllysine). Lysine 166 carries the N6-acetyllysine; alternate modification. Lysine 166 carries the N6-succinyllysine; alternate modification. Residue lysine 168 is modified to N6,N6,N6-trimethyllysine. Residue aspartate 175 is part of the active site. Arginine 201 is a binding site for oxaloacetate.

It belongs to the citrate synthase family. In terms of assembly, homodimer. In terms of processing, in response to mitochondrial stress, the precursor protein is ubiquitinated by the SIFI complex in the cytoplasm before mitochondrial import, leading to its degradation. Within the SIFI complex, UBR4 initiates ubiquitin chain that are further elongated or branched by KCMF1.

It is found in the mitochondrion matrix. It carries out the reaction oxaloacetate + acetyl-CoA + H2O = citrate + CoA + H(+). Its pathway is carbohydrate metabolism; tricarboxylic acid cycle; isocitrate from oxaloacetate: step 1/2. In terms of biological role, key enzyme of the Krebs tricarboxylic acid cycle which catalyzes the synthesis of citrate from acetyl coenzyme A and oxaloacetate. In Mesocricetus auratus (Golden hamster), this protein is Citrate synthase, mitochondrial.